A 383-amino-acid polypeptide reads, in one-letter code: 8-amino-7-oxononanoate synthase (383 aa).

Arg-23 provides a ligand contact to substrate. 110–111 (GF) serves as a coordination point for pyridoxal 5'-phosphate. His-135 is a substrate binding site. Residues Ser-181, His-209, and Thr-235 each coordinate pyridoxal 5'-phosphate. Lys-238 is subject to N6-(pyridoxal phosphate)lysine. Residue Thr-351 coordinates substrate.

It belongs to the class-II pyridoxal-phosphate-dependent aminotransferase family. BioF subfamily. Homodimer. The cofactor is pyridoxal 5'-phosphate.

The enzyme catalyses 6-carboxyhexanoyl-[ACP] + L-alanine + H(+) = (8S)-8-amino-7-oxononanoate + holo-[ACP] + CO2. Its pathway is cofactor biosynthesis; biotin biosynthesis. Catalyzes the decarboxylative condensation of pimeloyl-[acyl-carrier protein] and L-alanine to produce 8-amino-7-oxononanoate (AON), [acyl-carrier protein], and carbon dioxide. The protein is 8-amino-7-oxononanoate synthase of Aliivibrio salmonicida (strain LFI1238) (Vibrio salmonicida (strain LFI1238)).